A 257-amino-acid polypeptide reads, in one-letter code: UPF0246 protein LPC_0782 (257 aa).

Belongs to the UPF0246 family.

The chain is UPF0246 protein LPC_0782 from Legionella pneumophila (strain Corby).